The primary structure comprises 356 residues: RuBisCO accumulation factor 1 (356 aa).

An N-terminal alpha-helix region spans residues 9-192; the sequence is LSEEERQELL…RALIEALLLD (184 aa). Residues 216 to 342 are C-terminal beta-sheet; it reads PRLLPFAGTL…LVLILRPKRV (127 aa).

The protein belongs to the RAF family. In terms of assembly, homodimer. Forms an RbcL(8)-Raf1(8) complex. Forms complexes of many stoichiometries with RbcL with and without RbcS. RbcX and Raf1 can bind simultaneously to RbcL.

The protein localises to the cytoplasm. A major RuBisCO chaperone. Acts after GroEL-GroES chaperonin to fold and/or assemble the large subunit of RuBisCO (ccbL, rbcL). Cooperates with RbcX in RbcL folding, plays the major role in assembly of dimers into RbcL(8)-Raf1(8) intermediate complexes. RbcS replaces Raf1, leading to holoenzyme formation. Functionally, the Raf1 dimer brackets an RbcL dimer, leading to RbcL(8)-Raf1(8) complex formation. RbcS displaces Raf1, resulting in holoenzyme formation. Probably plays a role in early carboxysome assembly; in its absence CcaA, CcmM, CcmN, RbcL and RbcS colocalize in small patches while the shell proteins CcmK2, CcmK3 and CcmK4 are found diffused in the cytoplasm. Its function is as follows. It has been suggested that Raf1 and RbcX are partially functionally redundant. Other evidence suggests they are antagonistic in mediating RuBisCO assembly. This is RuBisCO accumulation factor 1 from Synechococcus elongatus (strain ATCC 33912 / PCC 7942 / FACHB-805) (Anacystis nidulans R2).